The chain runs to 692 residues: Peroxisomal primary amine oxidase (692 aa).

Residues 1 to 22 (MERLRQIASQATAASAAPARPA) show a composition bias toward low complexity. The segment at 1-26 (MERLRQIASQATAASAAPARPAHPLD) is disordered. N-linked (GlcNAc...) asparagine glycosylation is present at N243. Substrate is bound at residue 317–328 (ALDIGEYGAGYM). Residue D319 is the Proton acceptor of the active site. Residues C338 and C364 are joined by a disulfide bond. Position 402 to 407 (402 to 407 (AANYEY)) interacts with substrate. Catalysis depends on Y405, which acts as the Schiff-base intermediate with substrate; via topaquinone. Y405 carries the post-translational modification 2',4',5'-topaquinone. Positions 456 and 458 each coordinate Cu cation. Mn(2+) is bound by residues D465, D613, and I614. A Cu cation-binding site is contributed by H624.

Belongs to the copper/topaquinone oxidase family. Homodimer. It depends on Cu cation as a cofactor. Zn(2+) is required as a cofactor. The cofactor is L-topaquinone. Requires Mn(2+) as cofactor. In terms of processing, topaquinone (TPQ) is generated by copper-dependent autoxidation of a specific tyrosyl residue.

Its subcellular location is the peroxisome. It catalyses the reaction a primary methyl amine + O2 + H2O = an aldehyde + H2O2 + NH4(+). This chain is Peroxisomal primary amine oxidase (AMO), found in Pichia angusta (Yeast).